Reading from the N-terminus, the 226-residue chain is Type-5 uracil-DNA glycosylase (226 aa).

[4Fe-4S] cluster-binding residues include Cys23, Cys26, Cys125, and Cys140.

It belongs to the uracil-DNA glycosylase (UDG) superfamily. Type 5 (UDGb) family.

DNA glycosylase with broad substrate specificity. Can remove uracil from double-stranded DNA containing either a U/G or U/A base pair. Can also process hydroxymethyluracil (mispaired with guanine or adenine), hypoxanthine and fluorouracil. Exhibits a clear preference for double-stranded DNA substrates, but can also process uracil in single-stranded DNA, with lower efficiency. This chain is Type-5 uracil-DNA glycosylase, found in Pyrobaculum aerophilum (strain ATCC 51768 / DSM 7523 / JCM 9630 / CIP 104966 / NBRC 100827 / IM2).